Here is a 364-residue protein sequence, read N- to C-terminus: MPHSYPALSAEQKKELSDIALRIVAPGKGILAADESVGSMAKRLSQIGVENTEENRRLYRQVLFSADDRVKKCIGGVIFFHETLYQKDDNGVPFVRTIQDKGIVVGIKVDKGVVPLAGTDGETTTQGLDGLSERCAQYKKDGADFAKWRCVLKISERTPSALAILENANVLARYASICQQNGIVPIVEPEILPDGDHDLKRCQYVTEKVLAAVYKALSDHHVYLEGTLLKPNMVTPGHACPIKYTPEEIAMATVTALRRTVPPAVPGVTFLSGGQSEEEASLNLNAINRCPLPRPWALTFSYGRALQASALNAWRGQRDNAGAATEEFIKRAEVNGLAAQGKYEGSGEDGGAAAQSLYIANHAY.

At Tyr5 the chain carries Phosphotyrosine. Residues Ser36, Ser39, and Ser45 each carry the phosphoserine modification. Arg56 provides a ligand contact to substrate. Position 111 is an N6-acetyllysine (Lys111). Ser132 carries the post-translational modification Phosphoserine. Lys147 contacts substrate. Residue Glu188 is the Proton acceptor of the active site. Lys230 (schiff-base intermediate with dihydroxyacetone-P) is an active-site residue.

It belongs to the class I fructose-bisphosphate aldolase family. In terms of assembly, homotetramer. Interacts with ATP6V1E1.

It catalyses the reaction beta-D-fructose 1,6-bisphosphate = D-glyceraldehyde 3-phosphate + dihydroxyacetone phosphate. Its pathway is carbohydrate degradation; glycolysis; D-glyceraldehyde 3-phosphate and glycerone phosphate from D-glucose: step 4/4. The polypeptide is Fructose-bisphosphate aldolase C (ALDOC) (Macaca fascicularis (Crab-eating macaque)).